The primary structure comprises 1487 residues: Major viral transcription factor (1487 aa).

3 disordered regions span residues 41-295 (AAPD…LPPG), 310-370 (LAKT…AEEA), and 803-1007 (PPTR…HTPR). Residues 66–75 (VIPPPSPTPE) show a composition bias toward pro residues. Low complexity-rich tracts occupy residues 165–193 (PSSA…SSSS) and 201–213 (DGAG…SSSS). Residues 214 to 224 (DDSDSDEGGEE) are compositionally biased toward acidic residues. The segment covering 235–272 (AAKTPSAAGSPGPSSGGDRPAAGAATPKSCRSGAASPG) has biased composition (low complexity). The span at 273 to 285 (APAPAPASAPAPS) shows a compositional bias: pro residues. Low complexity-rich tracts occupy residues 807–829 (SQQP…AEGS), 849–860 (PSSHSQSPQHSQ), and 867–877 (ATTATCCRATQ). A compositionally biased stretch (polar residues) spans 878–893 (TNARSRGQQHQPQKAR). Residues 920-929 (HGRPRGKSGK) show a composition bias toward basic residues. A compositionally biased stretch (low complexity) spans 938–951 (AAQAGASASFSSSA). Basic and acidic residues predominate over residues 988-1007 (GPDRRGGFRRVPRGDCHTPR).

Belongs to the herpesviridae ICP4 family. Post-translationally, a long stretch of serine residues may be a major site of phosphorylation.

It localises to the host nucleus. Functionally, this IE protein is a multifunctional protein capable of migrating to the nucleus, binding to DNA, trans-activating other viral genes, and autoregulating its own synthesis. The sequence is that of Major viral transcription factor (IE) from Equine herpesvirus 1 (strain Ab4p) (EHV-1).